Here is a 1235-residue protein sequence, read N- to C-terminus: Topoisomerase 1-associated factor 1 (1235 aa).

4 disordered regions span residues 327-357 (RERK…GPPV), 584-610 (GEEA…HAER), 812-841 (EGAA…TEAR), and 897-1235 (EFSP…SDEE). Positions 585 to 603 (EEAEDVGVPEDNDADDSGD) are enriched in acidic residues. A compositionally biased stretch (acidic residues) spans 929–947 (DDDEEEIRGFLGDDDDEDF). Positions 964-973 (QKKRQRKRRR) are enriched in basic residues. Positions 977-986 (SGDEEDEGVS) are enriched in acidic residues. Residues 999 to 1044 (EKELEKIRKIKSEMYVHASDDETDDERDREFFERERKRQETKDSKF) are compositionally biased toward basic and acidic residues. 2 stretches are compositionally biased toward acidic residues: residues 1070-1081 (VLDDEPESDESE) and 1099-1118 (SEEE…SDEE). Residues 1124–1150 (AKSKTSKRKAAVPSKRPARRPGTAKKR) show a composition bias toward basic residues. The segment covering 1156 to 1170 (SDNDEDEDEEEDAMD) has biased composition (acidic residues). Residues 1193–1202 (LGRRIDKMAM) are compositionally biased toward basic and acidic residues. Over residues 1203 to 1212 (DDGDEDEDDQ) the composition is skewed to acidic residues.

Belongs to the timeless family. Component of the fork protection complex (FPC) consisting of tof-1 and csm-3.

The protein localises to the nucleus. In terms of biological role, forms a fork protection complex (FPC) with csm-3 and which is required for chromosome segregation during meiosis and DNA damage repair. FPC coordinates leading and lagging strand synthesis and moves with the replication fork. FPC stabilizes replication forks in a configuration that is recognized by replication checkpoint sensors. The protein is Topoisomerase 1-associated factor 1 (tof-1) of Neurospora crassa (strain ATCC 24698 / 74-OR23-1A / CBS 708.71 / DSM 1257 / FGSC 987).